A 290-amino-acid chain; its full sequence is Fructose-bisphosphate aldolase (290 aa).

S51 is a D-glyceraldehyde 3-phosphate binding site. D86 serves as the catalytic Proton donor. Zn(2+) is bound by residues H87, D107, E137, and H179. G180 provides a ligand contact to dihydroxyacetone phosphate. H208 is a binding site for Zn(2+). Residues 209 to 211 and 230 to 233 each bind dihydroxyacetone phosphate; these read GGS and NINT.

It belongs to the class II fructose-bisphosphate aldolase family. In terms of assembly, homodimer. Requires Zn(2+) as cofactor.

It carries out the reaction beta-D-fructose 1,6-bisphosphate = D-glyceraldehyde 3-phosphate + dihydroxyacetone phosphate. It functions in the pathway carbohydrate degradation; glycolysis; D-glyceraldehyde 3-phosphate and glycerone phosphate from D-glucose: step 4/4. In terms of biological role, catalyzes the aldol condensation of dihydroxyacetone phosphate (DHAP or glycerone-phosphate) with glyceraldehyde 3-phosphate (G3P) to form fructose 1,6-bisphosphate (FBP) in gluconeogenesis and the reverse reaction in glycolysis. The sequence is that of Fructose-bisphosphate aldolase (fba) from Ureaplasma parvum serovar 3 (strain ATCC 700970).